The following is a 303-amino-acid chain: Aliphatic sulfonates import ATP-binding protein SsuB (303 aa).

The ABC transporter domain occupies Leu39 to Leu263. Position 71–78 (Gly71–Ser78) interacts with ATP.

The protein belongs to the ABC transporter superfamily. Aliphatic sulfonates importer (TC 3.A.1.17.2) family. In terms of assembly, the complex is composed of two ATP-binding proteins (SsuB), two transmembrane proteins (SsuC) and a solute-binding protein (SsuA).

It is found in the cell inner membrane. It catalyses the reaction ATP + H2O + aliphatic sulfonate-[sulfonate-binding protein]Side 1 = ADP + phosphate + aliphatic sulfonateSide 2 + [sulfonate-binding protein]Side 1.. Part of the ABC transporter complex SsuABC involved in aliphatic sulfonates import. Responsible for energy coupling to the transport system. The sequence is that of Aliphatic sulfonates import ATP-binding protein SsuB from Cupriavidus necator (strain ATCC 17699 / DSM 428 / KCTC 22496 / NCIMB 10442 / H16 / Stanier 337) (Ralstonia eutropha).